Reading from the N-terminus, the 493-residue chain is Probable phospho-2-dehydro-3-deoxyheptonate aldolase, chloroplastic (493 aa).

A chloroplast-targeting transit peptide spans 1 to 58 (MAMSNTSALASKLLPSCKPHQPTLTFFSPSTTCQKKPRSSRPISAAVHVTQPPKTPIS).

It belongs to the class-II DAHP synthase family.

The protein localises to the plastid. It localises to the chloroplast. It carries out the reaction D-erythrose 4-phosphate + phosphoenolpyruvate + H2O = 7-phospho-2-dehydro-3-deoxy-D-arabino-heptonate + phosphate. It participates in metabolic intermediate biosynthesis; chorismate biosynthesis; chorismate from D-erythrose 4-phosphate and phosphoenolpyruvate: step 1/7. This Catharanthus roseus (Madagascar periwinkle) protein is Probable phospho-2-dehydro-3-deoxyheptonate aldolase, chloroplastic (DHS1).